Reading from the N-terminus, the 129-residue chain is Small ribosomal subunit protein uS11 (129 aa).

The protein belongs to the universal ribosomal protein uS11 family. In terms of assembly, part of the 30S ribosomal subunit. Interacts with proteins S7 and S18. Binds to IF-3.

Located on the platform of the 30S subunit, it bridges several disparate RNA helices of the 16S rRNA. Forms part of the Shine-Dalgarno cleft in the 70S ribosome. The polypeptide is Small ribosomal subunit protein uS11 (Salmonella typhi).